A 317-amino-acid polypeptide reads, in one-letter code: tRNA pseudouridine synthase B (317 aa).

D47 serves as the catalytic Nucleophile.

The protein belongs to the pseudouridine synthase TruB family. Type 1 subfamily.

The catalysed reaction is uridine(55) in tRNA = pseudouridine(55) in tRNA. Responsible for synthesis of pseudouridine from uracil-55 in the psi GC loop of transfer RNAs. This chain is tRNA pseudouridine synthase B, found in Shewanella denitrificans (strain OS217 / ATCC BAA-1090 / DSM 15013).